Reading from the N-terminus, the 338-residue chain is DNA-directed RNA polymerase subunit alpha (338 aa).

The segment at 1–234 (MIQKNWQELI…DQLNVFVNFE (234 aa)) is alpha N-terminal domain (alpha-NTD). Positions 250 to 338 (FNPALLKKVD…ELAKRFEEHY (89 aa)) are alpha C-terminal domain (alpha-CTD).

It belongs to the RNA polymerase alpha chain family. Homodimer. The RNAP catalytic core consists of 2 alpha, 1 beta, 1 beta' and 1 omega subunit. When a sigma factor is associated with the core the holoenzyme is formed, which can initiate transcription.

The enzyme catalyses RNA(n) + a ribonucleoside 5'-triphosphate = RNA(n+1) + diphosphate. Functionally, DNA-dependent RNA polymerase catalyzes the transcription of DNA into RNA using the four ribonucleoside triphosphates as substrates. This chain is DNA-directed RNA polymerase subunit alpha, found in Beijerinckia indica subsp. indica (strain ATCC 9039 / DSM 1715 / NCIMB 8712).